A 666-amino-acid polypeptide reads, in one-letter code: ATP-dependent zinc metalloprotease FtsH (666 aa).

The disordered stretch occupies residues 1 to 23; it reads MSREVTSGLPQDKPTGSAPPPPP. Over 1–27 the chain is Cytoplasmic; sequence MSREVTSGLPQDKPTGSAPPPPPPWRR. The chain crosses the membrane as a helical span at residues 28–48; that stretch reads WLLPIGLLVSLVLLFTFPMRP. Residues 49-125 lie on the Extracellular side of the membrane; that stretch reads SSGKTLTYSE…RPPGPSLASQ (77 aa). The helical transmembrane segment at 126-146 threads the bilayer; sequence VLAGVLSFLPFLLLLGLFAYS. At 147–666 the chain is on the cytoplasmic side; it reads GRRAGAGFLA…RTAASSDDLL (520 aa). 219-226 contributes to the ATP binding site; the sequence is GPPGTGKT. Histidine 442 provides a ligand contact to Zn(2+). Glutamate 443 is a catalytic residue. Zn(2+)-binding residues include histidine 446 and aspartate 518. The segment at 626 to 666 is disordered; sequence PEEHREAAARHVRRPGIAAATGASMAGGSEPRTAASSDDLL. Positions 641–653 are enriched in low complexity; it reads GIAAATGASMAGG.

In the central section; belongs to the AAA ATPase family. The protein in the C-terminal section; belongs to the peptidase M41 family. In terms of assembly, homohexamer. Requires Zn(2+) as cofactor.

Its subcellular location is the cell membrane. Acts as a processive, ATP-dependent zinc metallopeptidase for both cytoplasmic and membrane proteins. Plays a role in the quality control of integral membrane proteins. The sequence is that of ATP-dependent zinc metalloprotease FtsH from Acidothermus cellulolyticus (strain ATCC 43068 / DSM 8971 / 11B).